The chain runs to 290 residues: ATP synthase gamma chain (290 aa).

The protein belongs to the ATPase gamma chain family. In terms of assembly, F-type ATPases have 2 components, CF(1) - the catalytic core - and CF(0) - the membrane proton channel. CF(1) has five subunits: alpha(3), beta(3), gamma(1), delta(1), epsilon(1). CF(0) has three main subunits: a, b and c.

It localises to the cell membrane. In terms of biological role, produces ATP from ADP in the presence of a proton gradient across the membrane. The gamma chain is believed to be important in regulating ATPase activity and the flow of protons through the CF(0) complex. The chain is ATP synthase gamma chain from Rubrobacter xylanophilus (strain DSM 9941 / JCM 11954 / NBRC 16129 / PRD-1).